The sequence spans 1489 residues: DEAD-box ATP-dependent DNA helicase Fancm (1489 aa).

The Helicase ATP-binding domain maps to 65-237 (IVQSALFKNT…AVCRNLYISN (173 aa)). 78-85 (LPTGLGKT) serves as a coordination point for ATP. The DEAH box motif lies at 185–188 (DEAH). One can recognise a Helicase C-terminal domain in the interval 418-584 (KLRQVLVQHF…VVKLSLYEQN (167 aa)). 6 disordered regions span residues 591–647 (KFQP…ESQQ), 980–1000 (VEES…ESNH), 1145–1182 (TETI…PQGK), 1196–1222 (VLPC…SIQE), 1255–1293 (NPTI…PQIA), and 1452–1489 (ERRK…VLID). Over residues 594–610 (PKCEEKHMEPVAEEKPK) the composition is skewed to basic and acidic residues. Positions 611-625 (PKSAAKTKESRKRKQ) are enriched in basic residues. Positions 985–998 (RSTPISIADSSGES) are enriched in polar residues. Positions 1149 to 1161 (KNSENKNSHEDGS) are enriched in basic and acidic residues. Positions 1480-1489 (SDEDDVVLID) are enriched in acidic residues.

The protein belongs to the DEAD box helicase family. DEAH subfamily. FANCM sub-subfamily.

It is found in the nucleus. The enzyme catalyses ATP + H2O = ADP + phosphate + H(+). It catalyses the reaction Couples ATP hydrolysis with the unwinding of duplex DNA by translocating in the 3'-5' direction.. In terms of biological role, a ssDNA-dependent ATPase with 3' to 5' helicase activity. Involved in multiple DNA-damage responses, some that require ATPase and helicase activity and some that are independent of these. Involved in DNA interstrand cross-link repair, probably together with Fancl and other Fanconi anemia pathway homologs. Independent of Fancl involved in DNA double strand break repair, including contributing to the synthesis-dependent strand annealing (SDSA) pathway. Probably contributes to SDSA by unwinding short duplex regions in complex D-loop-like DNA structures. The protein is DEAD-box ATP-dependent DNA helicase Fancm of Drosophila melanogaster (Fruit fly).